Here is a 349-residue protein sequence, read N- to C-terminus: MTDITPEASLRSLINSTTHKWIFVGGKGGVGKTTSSCSIAIQMALAQPTKQFLLISTDPAHNLSDAFNEKFGKDARKVTGMDNLSCMEIDPSAALKDVNDMAIANGGDDDGLSGLLQGGALADLTGSIPGIDEALSFMEVMKHIKKQEQGDGEHFDTVIFDTAPTGHTLRFLQLPTTLTKVLDKFGAIAGRLGPMLNSFAGNPNVDVLGKMNELKESVQKIKKQFTDPDLTTFVCVCISEFLSLYETERLIQELISYDMDVNSIIVNQLLFAESDKEHNCKRCQARWKMQKKYLSQIDELYEDFHIVKMPLCAGEIRGLENLKKFSCFLNNKYDPETDGELVYQLEQGL.

An ATP-binding site is contributed by 27–34 (KGGVGKTT). The active site involves D58. ATP is bound by residues E240 and N267. Residues C280 and C283 each contribute to the Zn(2+) site.

It belongs to the arsA ATPase family. As to quaternary structure, homodimer. Component of the Golgi to ER traffic (GET) complex, which is composed of GET1, GET2 and GET3. Within the complex, GET1 and GET2 form a heterotetramer which is stabilized by phosphatidylinositol binding and which binds to the GET3 homodimer. Interacts with the chloride channel protein GEF1.

It localises to the cytoplasm. Its subcellular location is the endoplasmic reticulum. It is found in the golgi apparatus. In terms of biological role, ATPase required for the post-translational delivery of tail-anchored (TA) proteins to the endoplasmic reticulum. Recognizes and selectively binds the transmembrane domain of TA proteins in the cytosol. This complex then targets to the endoplasmic reticulum by membrane-bound receptors GET1 and GET2, where the tail-anchored protein is released for insertion. This process is regulated by ATP binding and hydrolysis. ATP binding drives the homodimer towards the closed dimer state, facilitating recognition of newly synthesized TA membrane proteins. ATP hydrolysis is required for insertion. Subsequently, the homodimer reverts towards the open dimer state, lowering its affinity for the GET1-GET2 receptor, and returning it to the cytosol to initiate a new round of targeting. Cooperates with the HDEL receptor ERD2 to mediate the ATP-dependent retrieval of resident ER proteins that contain a C-terminal H-D-E-L retention signal from the Golgi to the ER. Involved in low-level resistance to the oxyanions arsenite and arsenate, and in heat tolerance. This chain is ATPase GET3, found in Eremothecium gossypii (strain ATCC 10895 / CBS 109.51 / FGSC 9923 / NRRL Y-1056) (Yeast).